Reading from the N-terminus, the 295-residue chain is tRNA dimethylallyltransferase (295 aa).

Residue 9 to 16 (GATATGKS) coordinates ATP. 11–16 (TATGKS) is a substrate binding site. Residues 34-37 (DSRQ) are interaction with substrate tRNA.

It belongs to the IPP transferase family. In terms of assembly, monomer. The cofactor is Mg(2+).

It catalyses the reaction adenosine(37) in tRNA + dimethylallyl diphosphate = N(6)-dimethylallyladenosine(37) in tRNA + diphosphate. In terms of biological role, catalyzes the transfer of a dimethylallyl group onto the adenine at position 37 in tRNAs that read codons beginning with uridine, leading to the formation of N6-(dimethylallyl)adenosine (i(6)A). The sequence is that of tRNA dimethylallyltransferase from Nostoc sp. (strain PCC 7120 / SAG 25.82 / UTEX 2576).